We begin with the raw amino-acid sequence, 305 residues long: Acetaldehyde dehydrogenase (305 aa).

Residue S13–I16 coordinates NAD(+). Catalysis depends on C128, which acts as the Acyl-thioester intermediate. NAD(+)-binding positions include S159–N167 and N278.

This sequence belongs to the acetaldehyde dehydrogenase family.

It carries out the reaction acetaldehyde + NAD(+) + CoA = acetyl-CoA + NADH + H(+). This is Acetaldehyde dehydrogenase from Roseiflexus sp. (strain RS-1).